We begin with the raw amino-acid sequence, 192 residues long: uncharacterized protein (192 aa).

The Nudix hydrolase domain maps to 29–160 (RRQAAVLIPL…PLDIQRRGHD (132 aa)). The Nudix box signature appears at 67–89 (GAVDSTDASLIAAALREAHEEVA). E83 and E87 together coordinate Mg(2+).

It belongs to the Nudix hydrolase family. PCD1 subfamily. Mn(2+) serves as cofactor. The cofactor is Mg(2+).

Probably mediates the hydrolysis of some nucleoside diphosphate derivatives. This is an uncharacterized protein from Enterobacter sp. (strain 638).